The chain runs to 147 residues: Large ribosomal subunit protein uL13 (147 aa).

The segment at 128–147 (PEHPHSAQQPVPYELKQVAQ) is disordered.

The protein belongs to the universal ribosomal protein uL13 family. In terms of assembly, part of the 50S ribosomal subunit.

In terms of biological role, this protein is one of the early assembly proteins of the 50S ribosomal subunit, although it is not seen to bind rRNA by itself. It is important during the early stages of 50S assembly. The sequence is that of Large ribosomal subunit protein uL13 from Mycobacterium bovis (strain BCG / Pasteur 1173P2).